Here is a 154-residue protein sequence, read N- to C-terminus: MQVLVDADACPVVVKEMLYRAAQRVEVCVTLVANQYMRTPPSRFIKSLQVPAGFDVADDRIVELVSSGDLVITADIVLAAAALDKGAYVLDPRGSWFSRENIQERLTMREVMEQLRSSGVDTGGPAAYAQQDSKAFAGQLDRFLARHAPPGAVA.

It belongs to the UPF0178 family.

The protein is UPF0178 protein H16_B0290 of Cupriavidus necator (strain ATCC 17699 / DSM 428 / KCTC 22496 / NCIMB 10442 / H16 / Stanier 337) (Ralstonia eutropha).